We begin with the raw amino-acid sequence, 206 residues long: Cytochrome c oxidase assembly protein CtaG (206 aa).

Topologically, residues 1-12 are cytoplasmic; that stretch reads MSKKPAGKNSNR. The helical; Signal-anchor for type II membrane protein transmembrane segment at 13–35 threads the bilayer; the sequence is IVAAVCLAFFTGMIGMAYAAVPL. Topologically, residues 36-206 are periplasmic; that stretch reads YKMFCQATGY…ISDTEANLGG (171 aa). The interval 184-206 is disordered; it reads VASSEPVQGTSKIISDTEANLGG. Residues 188–206 are compositionally biased toward polar residues; sequence EPVQGTSKIISDTEANLGG.

Belongs to the COX11/CtaG family.

It localises to the cell inner membrane. Functionally, exerts its effect at some terminal stage of cytochrome c oxidase synthesis, probably by being involved in the insertion of the copper B into subunit I. The polypeptide is Cytochrome c oxidase assembly protein CtaG (Mesorhizobium japonicum (strain LMG 29417 / CECT 9101 / MAFF 303099) (Mesorhizobium loti (strain MAFF 303099))).